The sequence spans 908 residues: Glutamate receptor ionotropic, kainate 2 (908 aa).

Positions 1–31 (MKIISPVLSNLVFSRSIKVLLCLLWIGYSQG) are cleaved as a signal peptide. Over 32–561 (TTHVLRFGGI…VFSFLNPLSP (530 aa)) the chain is Extracellular. N-linked (GlcNAc...) asparagine glycosylation is found at Asn-67, Asn-73, Asn-275, Asn-378, Asn-412, Asn-423, and Asn-430. Cys-96 and Cys-347 are disulfide-bonded. The L-glutamate site is built by Pro-516, Ala-518, and Arg-523. A glycan (N-linked (GlcNAc...) asparagine) is linked at Asn-546. A helical membrane pass occupies residues 562-582 (DIWMYILLAYLGVSCVLFVIA). The Cytoplasmic portion of the chain corresponds to 583–638 (RFSPYEWYNPHPCNPDSDVVENNFTLLNSFWFGVGALMQQGSELMPKALSTRIVGG). A helical membrane pass occupies residues 639–659 (IWWFFTLIIISSYTANLAAFL). Over 660-819 (TVERMESPID…KEASALGVQN (160 aa)) the chain is Extracellular. Ala-689, Thr-690, and Glu-738 together coordinate L-glutamate. The cysteines at positions 750 and 804 are disulfide-linked. N-linked (GlcNAc...) asparagine glycosylation is present at Asn-751. The chain crosses the membrane as a helical span at residues 820-840 (IGGIFIVLAAGLVLSVFVAVG). The Cytoplasmic segment spans residues 841–908 (EFLYKSKKNA…RRLPGKETMA (68 aa)). Residues Ser-846 and Ser-868 each carry the phosphoserine; by PKC modification. A Glycyl lysine isopeptide (Lys-Gly) (interchain with G-Cter in SUMO1) cross-link involves residue Lys-886.

The protein belongs to the glutamate-gated ion channel (TC 1.A.10.1) family. GRIK2 subfamily. In terms of assembly, homotetramer and heterotetramer with GRIK5. Tetramers may be formed by the dimerization of dimers. Assembles into a kainate-gated homomeric channel that does not bind AMPA. Can form functional heteromeric receptors with GRIK4 and GRIK5. Can form functional heteromeric receptors with GRIK3. Interacts with DLG4. Interacts with NETO2. Interacts (via C-terminus) with KLHL17 (via kelch repeats); the interaction targets GRIK2 for degradation via ubiquitin-proteasome pathway. In terms of processing, sumoylation mediates kainate receptor-mediated endocytosis and regulates synaptic transmission. Sumoylation is enhanced by PIAS3 and desumoylated by SENP1. Post-translationally, ubiquitinated. Ubiquitination regulates the GRIK2 levels at the synapse by leading kainate receptor degradation through proteasome. Phosphorylated by PKC at Ser-868 upon agonist activation, this directly enhance sumoylation. Highest expression is found in the olfactory lobe, piriform cortex, dentate gyrus, hippocampus, granular cell layer of the cerebellum, and in caudate-putamen.

It localises to the cell membrane. Its subcellular location is the postsynaptic cell membrane. The catalysed reaction is Ca(2+)(in) = Ca(2+)(out). It catalyses the reaction Na(+)(in) = Na(+)(out). Cold receptor activity activated by temperatures between 10-19 degrees Celsius. In terms of biological role, ionotropic glutamate receptor that functions as a cation-permeable ligand-gated ion channel, gated by L-glutamate and the glutamatergic agonist kainic acid. L-glutamate acts as an excitatory neurotransmitter at many synapses in the central nervous system. Binding of the excitatory neurotransmitter L-glutamate induces a conformation change, leading to the opening of the cation channel, and thereby converts the chemical signal to an electrical impulse. The receptor then desensitizes rapidly and enters a transient inactive state, characterized by the presence of bound agonist. Modulates cell surface expression of NETO2. In association with GRIK3, involved in presynaptic facilitation of glutamate release at hippocampal mossy fiber synapses. Its function is as follows. Independent of its ionotropic glutamate receptor activity, acts as a thermoreceptor conferring sensitivity to cold temperatures. Functions in dorsal root ganglion neurons. In Rattus norvegicus (Rat), this protein is Glutamate receptor ionotropic, kainate 2 (Grik2).